Reading from the N-terminus, the 54-residue chain is MLSWALTFLIIAIIAAVLGFGGIAGTAAGIAKILFVVFLVLFIISFIMGRRPRM.

Helical transmembrane passes span 4–24 and 28–48; these read WALT…GGIA and AGIA…SFIM.

It belongs to the UPF0391 family.

Its subcellular location is the cell membrane. This chain is UPF0391 membrane protein Pmen_0080, found in Ectopseudomonas mendocina (strain ymp) (Pseudomonas mendocina).